The chain runs to 156 residues: SsrA-binding protein (156 aa).

This sequence belongs to the SmpB family.

Its subcellular location is the cytoplasm. Its function is as follows. Required for rescue of stalled ribosomes mediated by trans-translation. Binds to transfer-messenger RNA (tmRNA), required for stable association of tmRNA with ribosomes. tmRNA and SmpB together mimic tRNA shape, replacing the anticodon stem-loop with SmpB. tmRNA is encoded by the ssrA gene; the 2 termini fold to resemble tRNA(Ala) and it encodes a 'tag peptide', a short internal open reading frame. During trans-translation Ala-aminoacylated tmRNA acts like a tRNA, entering the A-site of stalled ribosomes, displacing the stalled mRNA. The ribosome then switches to translate the ORF on the tmRNA; the nascent peptide is terminated with the 'tag peptide' encoded by the tmRNA and targeted for degradation. The ribosome is freed to recommence translation, which seems to be the essential function of trans-translation. The protein is SsrA-binding protein of Clostridium tetani (strain Massachusetts / E88).